Reading from the N-terminus, the 345-residue chain is GTPase Obg (345 aa).

The 159-residue stretch at 1–159 folds into the Obg domain; it reads MKFLDQAKVY…KWIWLRLKLI (159 aa). One can recognise an OBG-type G domain in the interval 160 to 327; sequence ADAGLVGLPN…ALRALLAVID (168 aa). Residues 166-173, 191-195, 212-215, 279-282, and 308-310 contribute to the GTP site; these read GLPNAGKS, FTTLH, DIPG, SKID, and SSQ. 2 residues coordinate Mg(2+): S173 and T193.

The protein belongs to the TRAFAC class OBG-HflX-like GTPase superfamily. OBG GTPase family. As to quaternary structure, monomer. Mg(2+) serves as cofactor.

It is found in the cytoplasm. Its function is as follows. An essential GTPase which binds GTP, GDP and possibly (p)ppGpp with moderate affinity, with high nucleotide exchange rates and a fairly low GTP hydrolysis rate. Plays a role in control of the cell cycle, stress response, ribosome biogenesis and in those bacteria that undergo differentiation, in morphogenesis control. The chain is GTPase Obg from Azorhizobium caulinodans (strain ATCC 43989 / DSM 5975 / JCM 20966 / LMG 6465 / NBRC 14845 / NCIMB 13405 / ORS 571).